A 96-amino-acid polypeptide reads, in one-letter code: Putative membrane protein insertion efficiency factor (96 aa).

The protein belongs to the UPF0161 family.

It localises to the cell inner membrane. Its function is as follows. Could be involved in insertion of integral membrane proteins into the membrane. This Borreliella afzelii (strain PKo) (Borrelia afzelii) protein is Putative membrane protein insertion efficiency factor.